Consider the following 413-residue polypeptide: Transcription factor bHLH23 (413 aa).

The tract at residues 40 to 75 (SSQTQTPSCDPPLILRGSGSGDGEGNGPLPQPPPPL) is disordered. Thr-186 carries the post-translational modification Phosphothreonine. Phosphoserine is present on Ser-191. Disordered stretches follow at residues 232–278 (TEPV…RSRA) and 391–413 (ETEQ…KMFS). The span at 246–257 (TDERKRKTREET) shows a compositional bias: basic and acidic residues. One can recognise a bHLH domain in the interval 277 to 326 (RAAIMHKLSERRRRQKINEMMKALQELLPRCTKTDRSSMLDDVIEYVKSL).

In terms of assembly, homodimer. Expressed constitutively in leaves, stems, and flowers.

It is found in the nucleus. This Arabidopsis thaliana (Mouse-ear cress) protein is Transcription factor bHLH23 (BHLH23).